We begin with the raw amino-acid sequence, 266 residues long: Thymidylate synthase (266 aa).

Arginine 24 contacts dUMP. Histidine 54 contributes to the (6R)-5,10-methylene-5,6,7,8-tetrahydrofolate binding site. A dUMP-binding site is contributed by 129–130; sequence RR. The active-site Nucleophile is the cysteine 149. DUMP contacts are provided by residues 169 to 172, asparagine 180, and 210 to 212; these read RSAD and HIY. Position 172 (aspartate 172) interacts with (6R)-5,10-methylene-5,6,7,8-tetrahydrofolate. (6R)-5,10-methylene-5,6,7,8-tetrahydrofolate is bound at residue alanine 265.

This sequence belongs to the thymidylate synthase family. Bacterial-type ThyA subfamily. Homodimer.

It localises to the cytoplasm. It catalyses the reaction dUMP + (6R)-5,10-methylene-5,6,7,8-tetrahydrofolate = 7,8-dihydrofolate + dTMP. It participates in pyrimidine metabolism; dTTP biosynthesis. In terms of biological role, catalyzes the reductive methylation of 2'-deoxyuridine-5'-monophosphate (dUMP) to 2'-deoxythymidine-5'-monophosphate (dTMP) while utilizing 5,10-methylenetetrahydrofolate (mTHF) as the methyl donor and reductant in the reaction, yielding dihydrofolate (DHF) as a by-product. This enzymatic reaction provides an intracellular de novo source of dTMP, an essential precursor for DNA biosynthesis. This chain is Thymidylate synthase, found in Mycobacterium ulcerans (strain Agy99).